Here is a 369-residue protein sequence, read N- to C-terminus: Anhydro-N-acetylmuramic acid kinase (369 aa).

Residue G9 to D16 coordinates ATP.

This sequence belongs to the anhydro-N-acetylmuramic acid kinase family.

The enzyme catalyses 1,6-anhydro-N-acetyl-beta-muramate + ATP + H2O = N-acetyl-D-muramate 6-phosphate + ADP + H(+). Its pathway is amino-sugar metabolism; 1,6-anhydro-N-acetylmuramate degradation. It functions in the pathway cell wall biogenesis; peptidoglycan recycling. Functionally, catalyzes the specific phosphorylation of 1,6-anhydro-N-acetylmuramic acid (anhMurNAc) with the simultaneous cleavage of the 1,6-anhydro ring, generating MurNAc-6-P. Is required for the utilization of anhMurNAc either imported from the medium or derived from its own cell wall murein, and thus plays a role in cell wall recycling. In Phenylobacterium zucineum (strain HLK1), this protein is Anhydro-N-acetylmuramic acid kinase.